The primary structure comprises 886 residues: Alanine--tRNA ligase (886 aa).

Positions 570, 574, 672, and 676 each coordinate Zn(2+).

Belongs to the class-II aminoacyl-tRNA synthetase family. It depends on Zn(2+) as a cofactor.

It localises to the cytoplasm. The enzyme catalyses tRNA(Ala) + L-alanine + ATP = L-alanyl-tRNA(Ala) + AMP + diphosphate. Its function is as follows. Catalyzes the attachment of alanine to tRNA(Ala) in a two-step reaction: alanine is first activated by ATP to form Ala-AMP and then transferred to the acceptor end of tRNA(Ala). Also edits incorrectly charged Ser-tRNA(Ala) and Gly-tRNA(Ala) via its editing domain. The protein is Alanine--tRNA ligase of Acidothermus cellulolyticus (strain ATCC 43068 / DSM 8971 / 11B).